The chain runs to 545 residues: Chaperonin GroEL (545 aa).

ATP is bound by residues 29 to 32 (TLGP), lysine 50, 86 to 90 (DGTTT), glycine 415, and aspartate 495.

The protein belongs to the chaperonin (HSP60) family. In terms of assembly, forms a cylinder of 14 subunits composed of two heptameric rings stacked back-to-back. Interacts with the co-chaperonin GroES.

It localises to the cytoplasm. It carries out the reaction ATP + H2O + a folded polypeptide = ADP + phosphate + an unfolded polypeptide.. Functionally, together with its co-chaperonin GroES, plays an essential role in assisting protein folding. The GroEL-GroES system forms a nano-cage that allows encapsulation of the non-native substrate proteins and provides a physical environment optimized to promote and accelerate protein folding. In Bacteroides fragilis (strain ATCC 25285 / DSM 2151 / CCUG 4856 / JCM 11019 / LMG 10263 / NCTC 9343 / Onslow / VPI 2553 / EN-2), this protein is Chaperonin GroEL.